A 359-amino-acid chain; its full sequence is uncharacterized protein (359 aa).

3 disordered regions span residues 90-117 (QESPVRGMSPAPNGAKVPPRPHSEPSRK), 132-161 (IKKEEIKAKRPPSPPKACSTPGSCSSGMTS), and 235-359 (TSME…THRR). The span at 151–161 (TPGSCSSGMTS) shows a compositional bias: polar residues. Low complexity predominate over residues 245–259 (KPPTVKSPPTVKLPP). Positions 286-299 (EENKEVPKEAEHKP) are enriched in basic and acidic residues.

This is an uncharacterized protein from Homo sapiens (Human).